Reading from the N-terminus, the 72-residue chain is Translation initiation factor IF-1 (72 aa).

One can recognise an S1-like domain in the interval 1-72; that stretch reads MAKDDVIEVE…TRGRITYRFK (72 aa).

This sequence belongs to the IF-1 family. As to quaternary structure, component of the 30S ribosomal translation pre-initiation complex which assembles on the 30S ribosome in the order IF-2 and IF-3, IF-1 and N-formylmethionyl-tRNA(fMet); mRNA recruitment can occur at any time during PIC assembly.

The protein localises to the cytoplasm. Functionally, one of the essential components for the initiation of protein synthesis. Stabilizes the binding of IF-2 and IF-3 on the 30S subunit to which N-formylmethionyl-tRNA(fMet) subsequently binds. Helps modulate mRNA selection, yielding the 30S pre-initiation complex (PIC). Upon addition of the 50S ribosomal subunit IF-1, IF-2 and IF-3 are released leaving the mature 70S translation initiation complex. This chain is Translation initiation factor IF-1, found in Streptococcus gordonii (strain Challis / ATCC 35105 / BCRC 15272 / CH1 / DL1 / V288).